We begin with the raw amino-acid sequence, 273 residues long: Arginine and glutamate-rich protein 1 (273 aa).

Composition is skewed to basic residues over residues 1–29 and 37–58; these read MGRS…RSRS and VRKR…RSRS. Residues 1 to 74 are necessary and sufficient for RNA binding; that stretch reads MGRSRSRSSS…VSRRERDRER (74 aa). The tract at residues 1–113 is disordered; the sequence is MGRSRSRSSS…EEKKAEFERQ (113 aa). 2 positions are modified to phosphoserine: S58 and S60. At T61 the chain carries Phosphothreonine. Composition is skewed to basic and acidic residues over residues 66 to 84 and 93 to 113; these read SRRE…RIDI and SSLD…FERQ. Residues 75 to 273 are necessary and sufficient for transcriptional regulation; it reads ASSPPDRIDI…KLSFSLKTQD (199 aa). 2 positions are modified to phosphoserine: S76 and S77. Positions 172–176 match the LXXLL motif 1; degenerate motif; the sequence is LLEEL. Residues 201–205 carry the LXXLL motif 2; degenerate motif; it reads LERIL. The segment covering 238–253 has biased composition (basic and acidic residues); it reads MKLEQERQRQQKEEQK. Residues 238–273 are disordered; sequence MKLEQERQRQQKEEQKIILGKGKSRPKLSFSLKTQD. At S266 the chain carries Phosphoserine.

The protein belongs to the ARGLU1 family. In terms of assembly, interacts with MED1; the interaction is direct. Interacts with PUF60, U2AF2 and JMJD6; may interact with other proteins involved in RNA processing and splicing.

Its subcellular location is the nucleus. The protein resides in the nucleus speckle. The protein localises to the chromosome. Functionally, dual function regulator of gene expression; regulator of transcription and modulator of alternative splicing. General coactivator of nuclear receptor-induced gene expression, including genes activated by the glucocorticoid receptor NR3C1. Binds to a subset of pre-mRNAs and to components of the spliceosome machinery to directly modulate basal alternative splicing; involved in simple and complex cassette exon splicing events. Binds its own pre-mRNA and regulates its alternative splicing and degradation; one of the alternatively spliced products is a stable intronic sequence RNA (sisRNA) that binds the protein to regulate its ability to affect splicing. Binding of the sisRNA stimulates phase separation and localization to nuclear speckles, which may contribute to activation of nuclear receptor-induced gene expression. May also indirectly modulate alternative splicing. Regulates transcription of genes involved in heart development, neuronal cell function, protein localization and chromatin localization. Regulates splicing of genes involved in neurogenesis and chromatin organization. Essential for central nervous system development. Required for the estrogen-dependent expression of ESR1 target genes. Can act in cooperation with MED1. The chain is Arginine and glutamate-rich protein 1 (ARGLU1) from Bos taurus (Bovine).